The following is a 112-amino-acid chain: Serum amyloid A protein (112 aa).

Position 1 is a pyrrolidone carboxylic acid (glutamine 1). Basic and acidic residues predominate over residues 75-86; sequence MTRDQVREDTKA. Positions 75-112 are disordered; the sequence is MTRDQVREDTKADQFANEWGRSGKDPNHFRPPGLPDKY.

Belongs to the SAA family. As to expression, expressed by the liver; secreted in plasma.

It localises to the secreted. Major acute phase reactant. Apolipoprotein of the HDL complex. This Ovis aries (Sheep) protein is Serum amyloid A protein (SAA1).